The sequence spans 245 residues: MIIPAIDLIDGQIVRLYQGDYGQQTTFDLSPQTQLQSYQDQGASWLHIVDLTGAKEPAKRQTALIAKLTAGLNANIQVGGGIRTEEQVAELLSLGVKRVVIGSLAVKEPELVKGWFNKFGSEAICLALDVNINQNGEKIVAVSGWQSGGGKSLESIVEDFSQVGLKHALVTDINRDGTLTGANTALYRELSSHYPHIAWQASGGIATLEDVAAVRDSGAAGIIIGKALLINQFNVAEAIQCWPNE.

The active-site Proton acceptor is Asp7. The Proton donor role is filled by Asp129.

Belongs to the HisA/HisF family.

It is found in the cytoplasm. The catalysed reaction is 1-(5-phospho-beta-D-ribosyl)-5-[(5-phospho-beta-D-ribosylamino)methylideneamino]imidazole-4-carboxamide = 5-[(5-phospho-1-deoxy-D-ribulos-1-ylimino)methylamino]-1-(5-phospho-beta-D-ribosyl)imidazole-4-carboxamide. Its pathway is amino-acid biosynthesis; L-histidine biosynthesis; L-histidine from 5-phospho-alpha-D-ribose 1-diphosphate: step 4/9. The chain is 1-(5-phosphoribosyl)-5-[(5-phosphoribosylamino)methylideneamino] imidazole-4-carboxamide isomerase from Shewanella sp. (strain ANA-3).